The primary structure comprises 146 residues: Protein LDOC1 (146 aa).

Belongs to the LDOC1 family. In terms of assembly, interacts with NOD2. As to expression, ubiquitously expressed with high levels in brain ant thyroid and low expression in placenta, liver and leukocytes. Expressed as well in six of the seven human breast cancer cell lines examined.

Its subcellular location is the nucleus. Its function is as follows. May have an important role in the development and/or progression of some cancers. The sequence is that of Protein LDOC1 (LDOC1) from Homo sapiens (Human).